The sequence spans 121 residues: Small ribosomal subunit protein uS13 (121 aa).

The segment at His92–Arg121 is disordered. Residues Gln101–Arg121 show a composition bias toward basic residues.

The protein belongs to the universal ribosomal protein uS13 family. In terms of assembly, part of the 30S ribosomal subunit. Forms a loose heterodimer with protein S19. Forms two bridges to the 50S subunit in the 70S ribosome.

Its function is as follows. Located at the top of the head of the 30S subunit, it contacts several helices of the 16S rRNA. In the 70S ribosome it contacts the 23S rRNA (bridge B1a) and protein L5 of the 50S subunit (bridge B1b), connecting the 2 subunits; these bridges are implicated in subunit movement. Contacts the tRNAs in the A and P-sites. In Petrotoga mobilis (strain DSM 10674 / SJ95), this protein is Small ribosomal subunit protein uS13.